The primary structure comprises 400 residues: Argininosuccinate synthase (400 aa).

ATP contacts are provided by residues 6–14 and Ala33; that span reads AYSGGLDTS. Residues Tyr84 and Ser89 each contribute to the L-citrulline site. Residue Gly114 coordinates ATP. L-aspartate is bound by residues Thr116, Asn120, and Asp121. Asn120 serves as a coordination point for L-citrulline. Residues Arg124, Ser173, Ser182, Glu258, and Tyr270 each coordinate L-citrulline.

It belongs to the argininosuccinate synthase family. Type 1 subfamily. As to quaternary structure, homotetramer.

It is found in the cytoplasm. It carries out the reaction L-citrulline + L-aspartate + ATP = 2-(N(omega)-L-arginino)succinate + AMP + diphosphate + H(+). The protein operates within amino-acid biosynthesis; L-arginine biosynthesis; L-arginine from L-ornithine and carbamoyl phosphate: step 2/3. This chain is Argininosuccinate synthase, found in Thermus thermophilus (strain ATCC BAA-163 / DSM 7039 / HB27).